Reading from the N-terminus, the 513-residue chain is Probable DNA ligase (513 aa).

E213 is an ATP binding site. Catalysis depends on K215, which acts as the N6-AMP-lysine intermediate. ATP is bound by residues R220, R235, E264, F304, R376, and K382.

This sequence belongs to the ATP-dependent DNA ligase family. The cofactor is Mg(2+).

It catalyses the reaction ATP + (deoxyribonucleotide)n-3'-hydroxyl + 5'-phospho-(deoxyribonucleotide)m = (deoxyribonucleotide)n+m + AMP + diphosphate.. DNA ligase that seals nicks in double-stranded DNA during DNA replication, DNA recombination and DNA repair. The sequence is that of Probable DNA ligase from Anaeromyxobacter dehalogenans (strain 2CP-1 / ATCC BAA-258).